Reading from the N-terminus, the 601-residue chain is Secretogranin-2 (601 aa).

Positions 1–30 (MSSQRNYCLAGCLSSCILVILMSFSDAASF) are cleaved as a signal peptide. The segment at 89–109 (EQKDTQALSTDTAKSPTSDDE) is disordered. The span at 93–104 (TQALSTDTAKSP) shows a compositional bias: polar residues. Y151 is subject to Sulfotyrosine. Residues 258-273 (VESQTQEELKESKEEV) are compositionally biased toward basic and acidic residues. Residues 258-307 (VESQTQEELKESKEEVEKTDDMEDEIKRSGLLGLQDEEPEKDTKEQESEN) form a disordered region.

The protein belongs to the chromogranin/secretogranin protein family.

It localises to the secreted. Its function is as follows. Neuroendocrine protein of the granin family that regulates the biogenesis of secretory granules. The polypeptide is Secretogranin-2 (Pelophylax ridibundus (Marsh frog)).